Reading from the N-terminus, the 316-residue chain is D-alanine--D-alanine ligase (316 aa).

Residues 108 to 310 (ERYEELSVVK…FDELVDLIIK (203 aa)) enclose the ATP-grasp domain. 138-193 (EEKIGLPCVVKPRKEGSSIGTHICFSKEELLDALKNEFKNYDEMIVQEYIKGKEIT) is a binding site for ATP. Residues Asp-265, Glu-277, and Asn-279 each coordinate Mg(2+).

The protein belongs to the D-alanine--D-alanine ligase family. Mg(2+) serves as cofactor. Mn(2+) is required as a cofactor.

It is found in the cytoplasm. The catalysed reaction is 2 D-alanine + ATP = D-alanyl-D-alanine + ADP + phosphate + H(+). It functions in the pathway cell wall biogenesis; peptidoglycan biosynthesis. In terms of biological role, cell wall formation. The protein is D-alanine--D-alanine ligase of Fervidobacterium nodosum (strain ATCC 35602 / DSM 5306 / Rt17-B1).